Reading from the N-terminus, the 192-residue chain is MEQSVRSIDGARSVAGAGRTIIDRESINQRALQLLQRNRQRRLLLKRSEDRARYIPERREQKRELDETLETRNVPQHHISAHERITKAKSHGSKYKPSDLALAEIRKYQRSTDLLISRMPFARLVKEVTDQFASDEEPLRWQSMAIMALQEASEAYLVGLLEHTNLLALHAKRITIMRKDMQLARRIRGQFI.

Positions 88–190 are H3-like; the sequence is AKSHGSKYKP…MQLARRIRGQ (103 aa).

Belongs to the histone H3 family. As to quaternary structure, component of centromeric nucleosomes, where DNA is wrapped around a histone octamer core. The octamer contains two molecules each of H2A, H2B, CSE4/CENPA and H4 assembled in one CSE4-H4 heterotetramer and two H2A-H2B heterodimers. Interacts with the inner kinetochore. Post-translationally, ubiquitinated. Is degraded through ubiquitin-mediated proteolysis when not protected by its association to the kinetochore.

It is found in the nucleus. The protein localises to the chromosome. It localises to the centromere. Functionally, histone H3-like nucleosomal protein that is specifically found in centromeric nucleosomes. Replaces conventional H3 in the nucleosome core of centromeric chromatin that serves as an assembly site for the inner kinetochore. Required for recruitment and assembly of kinetochore proteins, mitotic progression and chromosome segregation. May serve as an epigenetic mark that propagates centromere identity through replication and cell division. This is Histone H3-like centromeric protein CSE4 (CSE4) from Kluyveromyces marxianus (Yeast).